The chain runs to 120 residues: NAD(P)H-quinone oxidoreductase subunit 3 (120 aa).

3 helical membrane-spanning segments follow: residues 6-26, 64-84, and 89-109; these read GYEYFLGFLLISGAVPILALT, MFALVFVIFDVETVFLYPWAV, and LGLLAFIEALVFITILVVALA.

Belongs to the complex I subunit 3 family. In terms of assembly, NDH-1 can be composed of about 15 different subunits; different subcomplexes with different compositions have been identified which probably have different functions.

The protein resides in the cellular thylakoid membrane. The enzyme catalyses a plastoquinone + NADH + (n+1) H(+)(in) = a plastoquinol + NAD(+) + n H(+)(out). The catalysed reaction is a plastoquinone + NADPH + (n+1) H(+)(in) = a plastoquinol + NADP(+) + n H(+)(out). Functionally, NDH-1 shuttles electrons from an unknown electron donor, via FMN and iron-sulfur (Fe-S) centers, to quinones in the respiratory and/or the photosynthetic chain. The immediate electron acceptor for the enzyme in this species is believed to be plastoquinone. Couples the redox reaction to proton translocation, and thus conserves the redox energy in a proton gradient. Cyanobacterial NDH-1 also plays a role in inorganic carbon-concentration. The chain is NAD(P)H-quinone oxidoreductase subunit 3 from Prochlorococcus marinus (strain NATL1A).